Reading from the N-terminus, the 321-residue chain is Serine/threonine-protein phosphatase PP1 isozyme 4 (321 aa).

Alanine 2 bears the N-acetylalanine mark. Aspartate 74, histidine 76, aspartate 102, and asparagine 134 together coordinate Mn(2+). Histidine 135 serves as the catalytic Proton donor. Residues histidine 183 and histidine 258 each coordinate Mn(2+).

The protein belongs to the PPP phosphatase family. PP-1 subfamily. In terms of assembly, interacts with the DELLA proteins RGA and GAI. Interacts with PIF3 and PIF5. Interacts with the auxin efflux carrier PIN1. Mn(2+) is required as a cofactor. Expressed in the vasculature of roots and cotyledons, tips of leaves, guard cells, bases of trichomes, pistils and stamen filaments.

The protein resides in the nucleus. It localises to the cytoplasm. It catalyses the reaction O-phospho-L-seryl-[protein] + H2O = L-seryl-[protein] + phosphate. It carries out the reaction O-phospho-L-threonyl-[protein] + H2O = L-threonyl-[protein] + phosphate. Phosphatase activity is strongly reduced by the protein phosphatase inhibitor 2 (I-2). In terms of biological role, serine/threonine-protein phosphatase that possesses phosphatase activity toward para-nitrophenyl phosphate (pNPP) in vitro. Acts as a positive regulator in the gibberellin (GA) signaling pathway to regulate plant growth and development. Promotes the GA-induced and proteasomal-dependent degradation of the DELLA proteins RGA and GAI by directly binding and dephosphorylating these proteins. Involved in the regulation of phytochrome B (phyB) signaling pathway that controls photomorphogenesis. Promotes the proteasomal-dependent degradation of PIF5 factor by directly binding and dephosphorylating this protein. Involved in the regulation of pavement cell (PC) interdigitation by modulating the auxin efflux carrier PIN1 polarity and endocytic trafficking. Regulates PIN1 polar targeting through direct binding and dephosphorylation. Acts antagonistically with PID in regulating PC development. The protein is Serine/threonine-protein phosphatase PP1 isozyme 4 of Arabidopsis thaliana (Mouse-ear cress).